Reading from the N-terminus, the 372-residue chain is MTFSKQLFLYLFFLFPLLHASHPQQCSSSSCGRDDVHVRFPFWLLSKQPELCGHAGFNLQCTASPKTALKLPNSGTFLVREIDYLSQQIRLYDPENCLARKLLTFDISRSPFSALYLVSYTFLSCPNEVAKSSRFDSIPCLGNSTTSFLATTSLDLAKSMLPSCQIVKTLDVPVSRRVIAKKSRFSTDVNDKDLWLKWDSPSCSDCERDFLRCGFRSNTSLQVKCFPFENSGYNTEPQVLKIILLSIIGPLTIFATCIAVGVCTSERFASLIQRNVAIAALQPNEVIVTTGLDESIIESYKKTELGESRRLPGNNDDIVCPICLSEYASKETVRCIPECDHCFHSECIDVWLKIHGSCPLCRNSPSPARQAV.

Positions 1–20 are cleaved as a signal peptide; it reads MTFSKQLFLYLFFLFPLLHA. The helical transmembrane segment at 242–262 threads the bilayer; the sequence is IILLSIIGPLTIFATCIAVGV. An RING-type; atypical zinc finger spans residues 320–362; the sequence is CPICLSEYASKETVRCIPECDHCFHSECIDVWLKIHGSCPLCR.

This sequence belongs to the RING-type zinc finger family. ATL subfamily.

It localises to the membrane. It catalyses the reaction S-ubiquitinyl-[E2 ubiquitin-conjugating enzyme]-L-cysteine + [acceptor protein]-L-lysine = [E2 ubiquitin-conjugating enzyme]-L-cysteine + N(6)-ubiquitinyl-[acceptor protein]-L-lysine.. It functions in the pathway protein modification; protein ubiquitination. In Arabidopsis thaliana (Mouse-ear cress), this protein is Putative RING-H2 finger protein ATL21A (ATL21A).